The following is a 337-amino-acid chain: G-protein coupled receptor 26 (337 aa).

Residues 1-10 (MNSWDAGLAG) are Extracellular-facing. A helical transmembrane segment spans residues 11 to 31 (LLVGTIGVSLLSNGLVLLCLL). Topologically, residues 32–47 (HSADIRRQAPALFTLN) are cytoplasmic. The helical transmembrane segment at 48–68 (LTCGNLLCTVVNMPLTLAGVV) threads the bilayer. At 69-81 (AQRQPAGDRLCRL) the chain is on the extracellular side. Cysteines 79 and 156 form a disulfide. The helical transmembrane segment at 82 to 102 (AAFLDTFLAANSMLSMAALSI) threads the bilayer. At 103–123 (DRWVAVVFPLSYRAKMRLRDA) the chain is on the cytoplasmic side. The chain crosses the membrane as a helical span at residues 124 to 144 (AFMVAYTWLHALTFPATALAL). Over 145–168 (SWLGFHQLYASCTLCSRRPDERLR) the chain is Extracellular. A helical membrane pass occupies residues 169 to 189 (FAVFTSAFHALSFLLSFIVLC). The Cytoplasmic segment spans residues 190 to 245 (FTYLKVLKVARFHCKRIDVITMQTLVLLVDIHPSVRERCLEEQKRRRQRATKKIST). A helical transmembrane segment spans residues 246-266 (FIGTFLVCFAPYVITRLVELF). The Extracellular portion of the chain corresponds to 267-276 (STAPIDSHWG). The helical transmembrane segment at 277–297 (VLSKCLAYSKAASDPFVYSLL) threads the bilayer. The Cytoplasmic segment spans residues 298–337 (RHQYRRSCKELLNRIFNRRSIHSVGLTGDSHSQNILPVSE).

The protein belongs to the G-protein coupled receptor 1 family. In terms of tissue distribution, detected in extracts of several brain regions including striatum, pons, cerebellum and cortex. Not detected in numerous peripheral tissue extracts, except in testis. In the brain, detected in cortical structures including the anterior cingulate area, posterior cingulate and the frontoparietal, somatosensory and piriform cortices. Prominent also in the olfactory tubercle, the islands of Calleja, ventromedial and posterior nuclei of the hypothalamus, the medial septal nucleus, nucleus of the diagonal band and the ventral tegmental area. Localized also to hippocampal structures, with signals strongest over the CA2 and CA3 regions of Ammon's horn and less so over the dentate gyrus. Expressed in the caudate putamen only in its most caudal portion, with a decreasing gradient of signal from the dorsal to ventral aspect. Strong expression associated with a single pontine structure, the inferior olivary nucleus.

Its subcellular location is the cell membrane. Its function is as follows. Orphan receptor. Displays a significant level of constitutive activity. Its effect is mediated by G(s)-alpha protein that stimulate adenylate cyclase, resulting in an elevation of intracellular cAMP. This chain is G-protein coupled receptor 26 (Gpr26), found in Rattus norvegicus (Rat).